A 490-amino-acid polypeptide reads, in one-letter code: Bifunctional protein HldE (490 aa).

A ribokinase region spans residues 1–330; it reads MNNFDTLLQS…RKILPHASLA (330 aa). 205–208 lines the ATP pocket; that stretch reads NRKE. Asp275 is an active-site residue. The cytidylyltransferase stretch occupies residues 358–490; that stretch reads FTNGCFDILH…LVEKAREGTS (133 aa).

This sequence in the N-terminal section; belongs to the carbohydrate kinase PfkB family. The protein in the C-terminal section; belongs to the cytidylyltransferase family. As to quaternary structure, homodimer.

The catalysed reaction is D-glycero-beta-D-manno-heptose 7-phosphate + ATP = D-glycero-beta-D-manno-heptose 1,7-bisphosphate + ADP + H(+). The enzyme catalyses D-glycero-beta-D-manno-heptose 1-phosphate + ATP + H(+) = ADP-D-glycero-beta-D-manno-heptose + diphosphate. The protein operates within nucleotide-sugar biosynthesis; ADP-L-glycero-beta-D-manno-heptose biosynthesis; ADP-L-glycero-beta-D-manno-heptose from D-glycero-beta-D-manno-heptose 7-phosphate: step 1/4. It functions in the pathway nucleotide-sugar biosynthesis; ADP-L-glycero-beta-D-manno-heptose biosynthesis; ADP-L-glycero-beta-D-manno-heptose from D-glycero-beta-D-manno-heptose 7-phosphate: step 3/4. In terms of biological role, catalyzes the phosphorylation of D-glycero-D-manno-heptose 7-phosphate at the C-1 position to selectively form D-glycero-beta-D-manno-heptose-1,7-bisphosphate. Its function is as follows. Catalyzes the ADP transfer from ATP to D-glycero-beta-D-manno-heptose 1-phosphate, yielding ADP-D-glycero-beta-D-manno-heptose. This chain is Bifunctional protein HldE, found in Rhodopseudomonas palustris (strain HaA2).